The primary structure comprises 611 residues: Leukotriene A-4 hydrolase (611 aa).

K73 is subject to N6-acetyllysine. Residues Q135–Q137 and P267–E272 each bind a peptide. Residue H296 coordinates Zn(2+). E297 acts as the Proton acceptor in catalysis. 2 residues coordinate Zn(2+): H300 and E319. Position 337 is an N6-acetyllysine (K337). Y384 (proton donor) is an active-site residue. K414 bears the N6-acetyllysine mark. At S416 the chain carries Phosphoserine. An a peptide-binding site is contributed by R564–K566. N6-acetyllysine is present on K573.

The protein belongs to the peptidase M1 family. In terms of assembly, monomer. Zn(2+) serves as cofactor. In terms of processing, phosphorylation at Ser-416 inhibits leukotriene-A4 hydrolase activity.

The protein resides in the cytoplasm. It catalyses the reaction leukotriene A4 + H2O = leukotriene B4. It carries out the reaction (5S,6S)-epoxy-(18R)-hydroxy-(7E,9E,11Z,14Z,16E)-eicosapentaenoate + H2O = resolvin E1. The catalysed reaction is (5S,6S)-epoxy-(18S)-hydroxy-(7E,9E,11Z,14Z,16E)-eicosapentaenoate + H2O = 18S-resolvin E1. The enzyme catalyses Release of the N-terminal residue from a tripeptide.. Its pathway is lipid metabolism; leukotriene B4 biosynthesis. Its activity is regulated as follows. Inhibited by bestatin. Inhibited by captopril. The epoxide hydrolase activity is restrained by suicide inactivation that involves binding of LTA4 to Tyr-379. 4-(4-benzylphenyl)thiazol-2-amine (ARM1) selectively inhibits the epoxide hydrolase activity. Bifunctional zinc metalloenzyme that comprises both epoxide hydrolase (EH) and aminopeptidase activities. Acts as an epoxide hydrolase to catalyze the conversion of LTA4 to the pro-inflammatory mediator leukotriene B4 (LTB4). Also has aminopeptidase activity, with high affinity for N-terminal arginines of various synthetic tripeptides. In addition to its pro-inflammatory EH activity, may also counteract inflammation by its aminopeptidase activity, which inactivates by cleavage another neutrophil attractant, the tripeptide Pro-Gly-Pro (PGP), a bioactive fragment of collagen generated by the action of matrix metalloproteinase-9 (MMP9) and prolylendopeptidase (PREPL). Involved also in the biosynthesis of resolvin E1 and 18S-resolvin E1 from eicosapentaenoic acid, two lipid mediators that show potent anti-inflammatory and pro-resolving actions. The sequence is that of Leukotriene A-4 hydrolase (Lta4h) from Rattus norvegicus (Rat).